A 347-amino-acid polypeptide reads, in one-letter code: Anthranilate phosphoribosyltransferase (347 aa).

5-phospho-alpha-D-ribose 1-diphosphate-binding positions include Gly88, 91-92, Thr96, 98-101, 116-124, and Ser128; these read GD, NIST, and KHGNRAASS. Gly88 provides a ligand contact to anthranilate. Residue Ser100 coordinates Mg(2+). Position 119 (Asn119) interacts with anthranilate. Residue Arg174 participates in anthranilate binding. The Mg(2+) site is built by Asp233 and Glu234.

This sequence belongs to the anthranilate phosphoribosyltransferase family. Homodimer. The cofactor is Mg(2+).

The enzyme catalyses N-(5-phospho-beta-D-ribosyl)anthranilate + diphosphate = 5-phospho-alpha-D-ribose 1-diphosphate + anthranilate. Its pathway is amino-acid biosynthesis; L-tryptophan biosynthesis; L-tryptophan from chorismate: step 2/5. Its function is as follows. Catalyzes the transfer of the phosphoribosyl group of 5-phosphorylribose-1-pyrophosphate (PRPP) to anthranilate to yield N-(5'-phosphoribosyl)-anthranilate (PRA). The sequence is that of Anthranilate phosphoribosyltransferase from Rhodospirillum rubrum (strain ATCC 11170 / ATH 1.1.1 / DSM 467 / LMG 4362 / NCIMB 8255 / S1).